The sequence spans 493 residues: Glutathione hydrolase 6 (493 aa).

The Cytoplasmic segment spans residues 1–54 (MERAEEPVVYQKLLPWEPSLESEEEVEEEETSEALVLNPRRHQDSSRNKAGGLP). A disordered region spans residues 19-52 (SLESEEEVEEEETSEALVLNPRRHQDSSRNKAGG). Over residues 20-32 (LESEEEVEEEETS) the composition is skewed to acidic residues. A helical; Signal-anchor for type II membrane protein transmembrane segment spans residues 55-75 (GTWARVVAALLLLAVGCSLAV). Topologically, residues 76–493 (RQLQNQGRST…PHACCPFQGF (418 aa)) are extracellular. Residues 83-105 (RSTGSLGSVAPPPGGHSHGPGVY) form a disordered region. 2 N-linked (GlcNAc...) asparagine glycosylation sites follow: N161 and N370. The span at 442 to 455 (PPTQAQHQHQGQQE) shows a compositional bias: low complexity. The disordered stretch occupies residues 442–464 (PPTQAQHQHQGQQEPTEHPSTCG).

Belongs to the gamma-glutamyltransferase family. Heterodimer composed of the light and heavy chains. The active site is located in the light chain. In terms of processing, cleaved by autocatalysis into a large and a small subunit and the autocatalytic cleavage is essential to the functional activation of the enzyme.

Its subcellular location is the membrane. It catalyses the reaction an N-terminal (5-L-glutamyl)-[peptide] + an alpha-amino acid = 5-L-glutamyl amino acid + an N-terminal L-alpha-aminoacyl-[peptide]. The catalysed reaction is glutathione + H2O = L-cysteinylglycine + L-glutamate. The enzyme catalyses an S-substituted glutathione + H2O = an S-substituted L-cysteinylglycine + L-glutamate. It participates in sulfur metabolism; glutathione metabolism. Its function is as follows. Hydrolyzes and transfers gamma-glutamyl moieties from glutathione and other gamma-glutamyl compounds to acceptors. This is Glutathione hydrolase 6 from Homo sapiens (Human).